We begin with the raw amino-acid sequence, 600 residues long: Methionine--tRNA ligase (600 aa).

The short motif at 11–21 is the 'HIGH' region element; that stretch reads PYANGPRHIGH. Zn(2+)-binding residues include cysteine 143, cysteine 146, cysteine 156, and cysteine 159. The short motif at 351–355 is the 'KMSKS' region element; sequence KFSSS. Serine 354 provides a ligand contact to ATP.

This sequence belongs to the class-I aminoacyl-tRNA synthetase family. MetG type 1 subfamily. Monomer. It depends on Zn(2+) as a cofactor.

The protein localises to the cytoplasm. It carries out the reaction tRNA(Met) + L-methionine + ATP = L-methionyl-tRNA(Met) + AMP + diphosphate. Functionally, is required not only for elongation of protein synthesis but also for the initiation of all mRNA translation through initiator tRNA(fMet) aminoacylation. The chain is Methionine--tRNA ligase from Salinispora arenicola (strain CNS-205).